Reading from the N-terminus, the 324-residue chain is RING-H2 finger protein ATL3 (324 aa).

Residues 24 to 44 form a helical membrane-spanning segment; it reads IILTAIIVLFMAVLFVLILHL. The segment at 127-169 adopts an RING-type; atypical zinc-finger fold; it reads CSICLSELVKGDKARLLPKCNHSFHVECIDMWFQSHSTCPICR. Disordered stretches follow at residues 179-210, 226-248, and 299-324; these read SSKR…STSS, VSTG…ASQS, and RDKR…SVDP. Composition is skewed to polar residues over residues 192 to 210 and 226 to 235; these read NAGT…STSS and VSTGNTNVGT. Low complexity predominate over residues 306–324; the sequence is SNSSTSNSSSSNAVASVDP.

This sequence belongs to the RING-type zinc finger family. ATL subfamily.

It is found in the membrane. The catalysed reaction is S-ubiquitinyl-[E2 ubiquitin-conjugating enzyme]-L-cysteine + [acceptor protein]-L-lysine = [E2 ubiquitin-conjugating enzyme]-L-cysteine + N(6)-ubiquitinyl-[acceptor protein]-L-lysine.. It participates in protein modification; protein ubiquitination. This Arabidopsis thaliana (Mouse-ear cress) protein is RING-H2 finger protein ATL3 (ATL3).